We begin with the raw amino-acid sequence, 482 residues long: Catalase (482 aa).

Active-site residues include His53 and Asn126. Tyr336 serves as a coordination point for heme.

The protein belongs to the catalase family. The cofactor is heme.

The protein resides in the periplasm. The catalysed reaction is 2 H2O2 = O2 + 2 H2O. Its function is as follows. Decomposes hydrogen peroxide into water and oxygen; serves to protect cells from the toxic effects of hydrogen peroxide. Could protect cells in nodules which have a high potential to produce hydrogen peroxide because of the strong reducing conditions required for nitrogen fixation and the action of several proteins. This is Catalase (katA) from Aliivibrio fischeri (strain ATCC 700601 / ES114) (Vibrio fischeri).